Consider the following 264-residue polypeptide: Secretory carrier-associated membrane protein 4 (264 aa).

The interval 1-33 (MNRHHDPNPFDEDEEIVNPFSKGGGRVPAASRP) is disordered. Residues 1–122 (MNRHHDPNPF…AQKLQYLAFA (122 aa)) are Cytoplasmic-facing. Residues 51-85 (MNDSSQKQRKLADWEAELRKKEMDIKRREEAIAKF) are a coiled coil. Helical transmembrane passes span 123–143 (SWLG…VCWI), 150–170 (IFFL…VLWY), 185–205 (FGWF…AAIA), and 233–253 (IFYF…LWVL). The Cytoplasmic portion of the chain corresponds to 254–264 (QKIYLYFRGNK).

This sequence belongs to the SCAMP family.

It is found in the cell membrane. It localises to the cytoplasmic vesicle. The protein resides in the secretory vesicle membrane. In terms of biological role, probably involved in membrane trafficking. This is Secretory carrier-associated membrane protein 4 (SCAMP4) from Arabidopsis thaliana (Mouse-ear cress).